The chain runs to 486 residues: Malonate-semialdehyde dehydrogenase (486 aa).

Residues Phe154, Lys178, Glu181, Arg182, and Ser231 each contribute to the NAD(+) site. Catalysis depends on Cys286, which acts as the Nucleophile. Glu386 provides a ligand contact to NAD(+).

This sequence belongs to the aldehyde dehydrogenase family. IolA subfamily. In terms of assembly, homotetramer.

It carries out the reaction 3-oxopropanoate + NAD(+) + CoA + H2O = hydrogencarbonate + acetyl-CoA + NADH + H(+). It catalyses the reaction 2-methyl-3-oxopropanoate + NAD(+) + CoA + H2O = propanoyl-CoA + hydrogencarbonate + NADH + H(+). Its pathway is polyol metabolism; myo-inositol degradation into acetyl-CoA; acetyl-CoA from myo-inositol: step 7/7. Functionally, catalyzes the oxidation of malonate semialdehyde (MSA) and methylmalonate semialdehyde (MMSA) into acetyl-CoA and propanoyl-CoA, respectively. Is involved in a myo-inositol catabolic pathway. Bicarbonate, and not CO2, is the end-product of the enzymatic reaction. This chain is Malonate-semialdehyde dehydrogenase, found in Bacillus cereus (strain G9842).